The following is a 1095-amino-acid chain: Tyrosine-sulfated glycopeptide receptor 1 (1095 aa).

A helical transmembrane segment spans residues 23-43 (PHMVLFVLLYVLSISVFFLTV). N62 and N73 each carry an N-linked (GlcNAc...) asparagine glycan. 19 LRR repeats span residues 91-115 (ENRVTSIILSSRGLSGNLPSSVLDL), 116-139 (QRLSRLDLSHNRLSGPLPPGFLSA), 141-165 (DQLLVLDLSYNSFKGELPLQQSFGN), 170-195 (IFPIQTVDLSSNLLEGEILSSSVFLQ), 197-221 (AFNLTSFNVSNNSFTGSIPSFMCTA), 223-246 (PQLTKLDFSYNDFSGDLSQELSRC), 247-270 (SRLSVLRAGFNNLSGEIPKEIYNL), 271-294 (PELEQLFLPVNRLSGKIDNGITRL), 295-318 (TKLTLLELYSNHIEGEIPKDIGKL), 320-342 (KLSSLQLHVNNLMGSIPVSLANC), 344-366 (KLVKLNLRVNQLGGTLSAIDFSR), 367-391 (FQSLSILDLGNNSFTGEFPSTVYSC), 393-415 (MMTAMRFAGNKLTGQISPQVLEL), 416-439 (ESLSFFTFSDNKMTNLTGALSILQ), 441-466 (CKKLSTLIMAKNFYDETVPSNKDFLR), 470-494 (FPSLQIFGIGACRLTGEIPAWLIKL), 495-517 (QRVEVMDLSMNRFVGTIPGWLGT), 518-542 (LPDLFYLDLSDNFLTGELPKELFQL), and 566-589 (NPNNVTTNQQYNQLSSLPPTIYIK). N165 carries an N-linked (GlcNAc...) asparagine glycan. N199, N204, and N207 each carry an N-linked (GlcNAc...) asparagine glycan. N-linked (GlcNAc...) asparagine glycosylation occurs at N258. N341 carries an N-linked (GlcNAc...) asparagine glycan. A glycan (N-linked (GlcNAc...) asparagine) is linked at N377. Residue N430 is glycosylated (N-linked (GlcNAc...) asparagine). N569, N592, N616, N627, N640, N662, and N714 each carry an N-linked (GlcNAc...) asparagine glycan. LRR repeat units lie at residues 604 to 628 (LKVLHILELLGNNFSGSIPDELSNL), 629 to 652 (TNLERLDLSNNNLSGRIPWSLTGL), and 654 to 677 (FLSYFNVANNTLSGPIPTGTQFDT). Residues 721–741 (LVLGLFFGVSLILVLLALLVL) form a helical membrane-spanning segment. T792 and T800 each carry phosphothreonine. The 272-residue stretch at 803-1074 (FSQANIIGCG…PNIQQVVDWL (272 aa)) folds into the Protein kinase domain. Residues 809 to 817 (IGCGGFGLV) and K831 each bind ATP. Residues Y876 and Y916 each carry the phosphotyrosine modification. The Proton acceptor role is filled by D929. Position 971 is a phosphotyrosine (Y971).

The protein belongs to the protein kinase superfamily. Ser/Thr protein kinase family. Homo- and heterodimers with PSKR1. Interacts (via C-terminus) with AHA1 and AHA2 (via the R-domain). Post-translationally, autophosphorylated. As to expression, expressed ubiquitously, including in the shoot apical meristem and in the elongation zone of the root meristem.

It localises to the cell membrane. It carries out the reaction L-seryl-[protein] + ATP = O-phospho-L-seryl-[protein] + ADP + H(+). The catalysed reaction is L-threonyl-[protein] + ATP = O-phospho-L-threonyl-[protein] + ADP + H(+). Tyrosine-sulfated glycopeptide receptor with a serine/threonine-protein kinase activity. Regulates, in response to tyrosine-sulfated glycopeptide binding, a signaling cascade involved in cellular proliferation and plant growth. Not involved in PSK perception. Involved in plant immunity, with antagonistic effects on bacterial and fungal resistances. Mediates activation of the plasma membrane H(+)-ATPase by PSY1. Phosphorylates AHA2 at Thr-881. This Arabidopsis thaliana (Mouse-ear cress) protein is Tyrosine-sulfated glycopeptide receptor 1.